The chain runs to 255 residues: 5-oxoprolinase subunit A (255 aa).

The protein belongs to the LamB/PxpA family. In terms of assembly, forms a complex composed of PxpA, PxpB and PxpC.

It carries out the reaction 5-oxo-L-proline + ATP + 2 H2O = L-glutamate + ADP + phosphate + H(+). In terms of biological role, catalyzes the cleavage of 5-oxoproline to form L-glutamate coupled to the hydrolysis of ATP to ADP and inorganic phosphate. The sequence is that of 5-oxoprolinase subunit A from Clostridium kluyveri (strain ATCC 8527 / DSM 555 / NBRC 12016 / NCIMB 10680 / K1).